Reading from the N-terminus, the 374-residue chain is Putative F-box protein At5g60060 (374 aa).

An F-box domain is found at 9-61 (SQWSDLPLDILELISDRLDHDSSDTIHLLCLRSVCATWRLSLPLSNKNNRLSK).

In Arabidopsis thaliana (Mouse-ear cress), this protein is Putative F-box protein At5g60060.